Consider the following 407-residue polypeptide: [Pyruvate dehydrogenase (acetyl-transferring)] kinase isozyme 2, mitochondrial (407 aa).

Residues 135–364 (LEYKDTYGDD…DAVIYLKALS (230 aa)) form the Histidine kinase domain. Phosphotyrosine occurs at positions 215 and 216. Residues 251-258 (ELFKNAMR), Asp290, 309-310 (ST), and 325-330 (GFGYGL) contribute to the ATP site. Lys376 is modified (N6-succinyllysine).

The protein belongs to the PDK/BCKDK protein kinase family. As to quaternary structure, homodimer, and heterodimer with PDK1. Interacts with the pyruvate dehydrogenase complex subunit DLAT, and is part of the multimeric pyruvate dehydrogenase complex that contains multiple copies of pyruvate dehydrogenase (E1), dihydrolipoamide acetyltransferase (DLAT, E2) and lipoamide dehydrogenase (DLD, E3). In terms of tissue distribution, expressed in many tissues, with the highest level in heart and skeletal muscle, intermediate levels in brain, kidney, pancreas and liver, and low levels in placenta and lung.

It localises to the mitochondrion matrix. It carries out the reaction L-seryl-[pyruvate dehydrogenase E1 alpha subunit] + ATP = O-phospho-L-seryl-[pyruvate dehydrogenase E1 alpha subunit] + ADP + H(+). Its activity is regulated as follows. Activity is enhanced by binding to the pyruvate dehydrogenase subunit DLAT. Inhibited by ADP and pyruvate; these compounds interfere with DLAT binding and thereby inhibit kinase activity. Inhibited by dichloroacetate. Inhibited by AZD7545; this compound interferes with DLAT binding and thereby inhibits kinase activity. Functionally, kinase that plays a key role in the regulation of glucose and fatty acid metabolism and homeostasis via phosphorylation of the pyruvate dehydrogenase subunits PDHA1 and PDHA2. This inhibits pyruvate dehydrogenase activity, and thereby regulates metabolite flux through the tricarboxylic acid cycle, down-regulates aerobic respiration and inhibits the formation of acetyl-coenzyme A from pyruvate. Inhibition of pyruvate dehydrogenase decreases glucose utilization and increases fat metabolism. Mediates cellular responses to insulin. Plays an important role in maintaining normal blood glucose levels and in metabolic adaptation to nutrient availability. Via its regulation of pyruvate dehydrogenase activity, plays an important role in maintaining normal blood pH and in preventing the accumulation of ketone bodies under starvation. Plays a role in the regulation of cell proliferation and in resistance to apoptosis under oxidative stress. Plays a role in p53/TP53-mediated apoptosis. The sequence is that of [Pyruvate dehydrogenase (acetyl-transferring)] kinase isozyme 2, mitochondrial (PDK2) from Homo sapiens (Human).